The chain runs to 222 residues: Ribosomal RNA small subunit methyltransferase G (222 aa).

Residues G82, L87, 132–133 (AE), and R150 each bind S-adenosyl-L-methionine.

Belongs to the methyltransferase superfamily. RNA methyltransferase RsmG family.

The protein resides in the cytoplasm. Functionally, specifically methylates the N7 position of guanine in position 518 of 16S rRNA. This chain is Ribosomal RNA small subunit methyltransferase G, found in Corynebacterium jeikeium (strain K411).